Reading from the N-terminus, the 545-residue chain is Chaperonin GroEL 2 (545 aa).

ATP contacts are provided by residues 29–32 (TLGP), 86–90 (DGTTT), Gly413, 479–481 (NAA), and Asp495.

This sequence belongs to the chaperonin (HSP60) family. Forms a cylinder of 14 subunits composed of two heptameric rings stacked back-to-back. Interacts with the co-chaperonin GroES.

The protein localises to the cytoplasm. It carries out the reaction ATP + H2O + a folded polypeptide = ADP + phosphate + an unfolded polypeptide.. Together with its co-chaperonin GroES, plays an essential role in assisting protein folding. The GroEL-GroES system forms a nano-cage that allows encapsulation of the non-native substrate proteins and provides a physical environment optimized to promote and accelerate protein folding. The chain is Chaperonin GroEL 2 from Prochlorococcus marinus (strain AS9601).